Consider the following 375-residue polypeptide: Leucoanthocyanidin dioxygenase 1 (375 aa).

The region spanning 218–317 (LLLQLKINYY…RLSWVVFCEP (100 aa)) is the Fe2OG dioxygenase domain. The Fe cation site is built by His-242, Asp-244, and His-298. Residue Arg-308 participates in 2-oxoglutarate binding.

Belongs to the iron/ascorbate-dependent oxidoreductase family. L-ascorbate is required as a cofactor. It depends on Fe(2+) as a cofactor.

The catalysed reaction is a (2R,3S,4S)-leucoanthocyanidin + 2-oxoglutarate + O2 = a 4-H-anthocyanidin with a 3-hydroxy group + succinate + CO2 + 2 H2O. It participates in pigment biosynthesis; anthocyanin biosynthesis. Functionally, involved in anthocyanin and protoanthocyanidin biosynthesis by catalyzing the oxidation of leucoanthocyanidins into anthocyanidins. Is able to synthesize anthocyanin pigments from leucoanthocyanidins in aleurone tissue. Converts dihydroquercetin to quercetin in vitro. The chain is Leucoanthocyanidin dioxygenase 1 from Oryza sativa subsp. indica (Rice).